A 363-amino-acid chain; its full sequence is Protein RecA (363 aa).

Residue 79 to 86 (GPESSGKT) coordinates ATP.

Belongs to the RecA family.

It localises to the cytoplasm. Functionally, can catalyze the hydrolysis of ATP in the presence of single-stranded DNA, the ATP-dependent uptake of single-stranded DNA by duplex DNA, and the ATP-dependent hybridization of homologous single-stranded DNAs. It interacts with LexA causing its activation and leading to its autocatalytic cleavage. This chain is Protein RecA, found in Methylobacterium radiotolerans (strain ATCC 27329 / DSM 1819 / JCM 2831 / NBRC 15690 / NCIMB 10815 / 0-1).